The sequence spans 66 residues: Large ribosomal subunit protein bL35 (66 aa).

Residues 1 to 46 (MPKMKTHRASAKRFKRTANGGLKRHHAFTGHRFHGKTKKQRRHLRK) show a composition bias toward basic residues. Residues 1–52 (MPKMKTHRASAKRFKRTANGGLKRHHAFTGHRFHGKTKKQRRHLRKPAMVSR) form a disordered region.

This sequence belongs to the bacterial ribosomal protein bL35 family.

This chain is Large ribosomal subunit protein bL35, found in Lactobacillus acidophilus (strain ATCC 700396 / NCK56 / N2 / NCFM).